The primary structure comprises 618 residues: Protease 4 (618 aa).

Over 1–24 the chain is Cytoplasmic; that stretch reads MRTLWRFIAGFFKWTWRVLNFVRE. Residues 25–45 form a helical membrane-spanning segment; it reads MVLNLFFIFLVLVGVGIWMQI. Over 46-618 the chain is Periplasmic; sequence GNGSNSEQTA…AFCLTCANVR (573 aa). The active-site Proton donor/acceptor is the Lys-209. Catalysis depends on Ser-409, which acts as the Nucleophile.

It belongs to the peptidase S49 family. In terms of assembly, homotetramer.

The protein localises to the cell inner membrane. Its function is as follows. Digests cleaved signal peptides in vitro, its in vivo function is unknown. This activity is necessary to maintain proper secretion of mature proteins across the membrane. The chain is Protease 4 (sppA) from Salmonella typhi.